We begin with the raw amino-acid sequence, 830 residues long: MAPQPLKVGTSKLSKMVKSAPKTAGKAKKRAVEQVSEESDEEFGDQGSGIDMSDDEEEVDGDDEEDEDEAFPEFDSELEDNDQEEASDEEQDEQDTSDESEIVEEDSDSESGYNTSDIERMYASDDDLSSEENKDLPVDEKLSRLIAKNTVKPDDSIGTDDKISRAKEGVGRLVPSKHVKGSFVREYDEYEAGYGSESSTEDNPNTVGNIPMEWYDDLPHIGYDVNGRKIFRPLQGDELDKFLANVEDPSAWTSAEDKLLQQNVQLSDKELDIIRRLERAENPDADFDPYQPTIEWFTGEGKERVMPLSAAPEPKRRFVPSKWEHKKIMKIVKAIREGRIIPNKPSAEKPRFYPIWSDADQHNPHVMYMPAPQLPPPKTAESYNPPEEYLPTEEEKAEWEAMDKEDRKTDFLPEKYDALRKVPGYKNLVQEKFERCLDLYLAPRTRRVKLNIDPDSLIPKLPAPKELKPFPIASTVQYRHPGDTRVRSVSTSPDGQWIASGSEDGVVRVWDLGNGREVWRWDLHAGPIQYVEWSPSREESLLVALVAGKIAVLSPLALVAPHIAAQTLTHSNTAFATSSATTKQGAGNEVKGIESVKWTRPSERERERGVLVYVEVPGTPKQVTWHRKGDYFATVASDAANKSVLIHQLSRHGSQSPFRKTPGTIQRVAFHPSKPHFFAATQRYIRLYDLAAQKLIRTLQSGVKWISSMDVHSGGDNLIIGSYDKKLAWFDMDLSAKPYKTLRYHNRALRSVAYHPTLPLFASASDDGTVHIFHCTVYTDLMQNPLIVPLKILRGHKVIDGIGVLDLRWVPGKPWLVSSGADGEVRLWCS.

Positions Met-1 to Leu-142 are disordered. Composition is skewed to acidic residues over residues Val-35–Gly-44 and Met-52–Ser-109. Basic and acidic residues predominate over residues Glu-131–Leu-142. 6 WD repeats span residues Pro-481 to Arg-520, Leu-523 to Ile-563, Lys-660 to Thr-698, Ser-701 to Lys-740, Tyr-744 to Gln-783, and Ile-799 to Ser-830.

Belongs to the WD repeat BOP1/ERB1 family. Component of the NOP7 complex, composed of ERB1, NOP7 and YTM1. The complex is held together by ERB1, which interacts with NOP7 via its N-terminal domain and with YTM1 via a high-affinity interaction between the seven-bladed beta-propeller domains of the 2 proteins. The NOP7 complex associates with the 66S pre-ribosome.

The protein resides in the nucleus. Its subcellular location is the nucleolus. The protein localises to the nucleoplasm. In terms of biological role, component of the NOP7 complex, which is required for maturation of the 25S and 5.8S ribosomal RNAs and formation of the 60S ribosome. The chain is Ribosome biogenesis protein ERB1 from Cryptococcus neoformans var. neoformans serotype D (strain JEC21 / ATCC MYA-565) (Filobasidiella neoformans).